A 341-amino-acid polypeptide reads, in one-letter code: Hyaluronidase A (341 aa).

N-linked (GlcNAc...) asparagine glycosylation is found at asparagine 3, asparagine 68, and asparagine 83. Intrachain disulfides connect cysteine 23/cysteine 311 and cysteine 189/cysteine 201.

It belongs to the glycosyl hydrolase 56 family. As to expression, expressed by the venom gland.

It is found in the secreted. The catalysed reaction is Random hydrolysis of (1-&gt;4)-linkages between N-acetyl-beta-D-glucosamine and D-glucuronate residues in hyaluronate.. Its function is as follows. May hydrolyze high molecular weight hyaluronic acid to produce small oligosaccharides. This chain is Hyaluronidase A, found in Vespa velutina (Asian yellow-legged hornet).